A 335-amino-acid chain; its full sequence is Dye-decolorizing peroxidase (335 aa).

The active-site Proton acceptor is Asp-149. His-222 serves as a coordination point for heme. Residues 312 to 335 (LPQAATPTLAAGSLSIGSLKGSPR) are targeting peptide.

This sequence belongs to the DyP-type peroxidase family. In terms of assembly, homotetramer, presumably also in the encapsulin nanocompartment. Heme b serves as cofactor.

It is found in the encapsulin nanocompartment. It catalyses the reaction 2 a phenolic donor + H2O2 = 2 a phenolic radical donor + 2 H2O. Functionally, cargo of a type 1 encapsulin nanocompartment in situ; this cargo protects against oxidative stress at low pH. When expressed in the cytoplasm (absence of the encapsulin shell gene) it is almost as protective as the intact nanocompartment; its encapsulation has a modest yet significant effect on protection against oxidative stress at low pH. A heme-dependent peroxidase, it probably does not have deferrochelatase activity. Converts guaiacol and H2O2 to tetraguaiacol, also acts on 2,2'-azino-bis(3-ethylbenzothiazoline-6-sulfonic acid) (ABTS). Retains peroxidase activity when encapsulated but has a reduced set of substrates; acts on ABTS but not guaiacol. The polypeptide is Dye-decolorizing peroxidase (Mycobacterium tuberculosis (strain ATCC 25618 / H37Rv)).